The following is a 267-amino-acid chain: Membrane-spanning 4-domains subfamily A member 12 (267 aa).

Residues 1 to 91 (MMSSKPTSHA…MNFKEEAKAL (91 aa)) lie on the Cytoplasmic side of the membrane. Residues 92-112 (GVIQIMVGLMHIGFGIVLCLI) form a helical membrane-spanning segment. Over 113–120 (SFSFREVL) the chain is Extracellular. Residues 121-141 (GFASTAVIGGYPFWGGLSFII) form a helical membrane-spanning segment. Topologically, residues 142 to 160 (SGSLSVSASKELSRCLVKG) are cytoplasmic. Residues 161 to 181 (SLGMNIVSSILAFIGVILLLV) traverse the membrane as a helical segment. Residues 182 to 200 (DMCINGVAGQDYWAVLSGK) are Extracellular-facing. A helical membrane pass occupies residues 201-221 (GISATLMIFSLLEFFVACATA). Residues 222-267 (HFANQANTTTNMSVLVIPNMYESNPVTPASSSAPPRCNNYSANAPK) are Cytoplasmic-facing. The tract at residues 248–267 (TPASSSAPPRCNNYSANAPK) is disordered.

It belongs to the MS4A family.

Its subcellular location is the membrane. May be involved in signal transduction as a component of a multimeric receptor complex. The chain is Membrane-spanning 4-domains subfamily A member 12 (MS4A12) from Homo sapiens (Human).